The chain runs to 456 residues: Exodeoxyribonuclease 7 large subunit (456 aa).

It belongs to the XseA family. Heterooligomer composed of large and small subunits.

It localises to the cytoplasm. It carries out the reaction Exonucleolytic cleavage in either 5'- to 3'- or 3'- to 5'-direction to yield nucleoside 5'-phosphates.. Its function is as follows. Bidirectionally degrades single-stranded DNA into large acid-insoluble oligonucleotides, which are then degraded further into small acid-soluble oligonucleotides. This is Exodeoxyribonuclease 7 large subunit from Shigella boydii serotype 4 (strain Sb227).